The sequence spans 201 residues: Protein S40-5 (201 aa).

2 disordered regions span residues 1-39 (MARGRKLTMSQSERYLGSSYSYGDSNGNSATDESELTEE) and 134-178 (SIHE…EGVG). A compositionally biased stretch (low complexity) spans 17 to 29 (GSSYSYGDSNGNS).

This sequence belongs to the senescence regulator S40 family.

The protein resides in the cytoplasm. The protein is Protein S40-5 of Arabidopsis thaliana (Mouse-ear cress).